A 1072-amino-acid chain; its full sequence is Isoleucine--tRNA ligase, cytoplasmic (1072 aa).

The short motif at 47 to 57 (PFATGTPHYGH) is the 'HIGH' region element. Lys486 participates in a covalent cross-link: Glycyl lysine isopeptide (Lys-Gly) (interchain with G-Cter in ubiquitin). A 'KMSKS' region motif is present at residues 602–606 (KMSKS). An ATP-binding site is contributed by Lys605. A phosphoserine mark is found at Ser829 and Ser1059.

Belongs to the class-I aminoacyl-tRNA synthetase family.

It is found in the cytoplasm. It catalyses the reaction tRNA(Ile) + L-isoleucine + ATP = L-isoleucyl-tRNA(Ile) + AMP + diphosphate. This Saccharomyces cerevisiae (strain ATCC 204508 / S288c) (Baker's yeast) protein is Isoleucine--tRNA ligase, cytoplasmic (ILS1).